The primary structure comprises 293 residues: Oxidoreductase clz16 (293 aa).

The protein belongs to the asaB hydroxylase/desaturase family.

The protein operates within secondary metabolite biosynthesis. Its function is as follows. Oxidoreductase; part of the gene cluster that mediates the biosynthesis of squalestatin S1 (SQS1, also known as zaragozic acid A), a heavily oxidized fungal polyketide that offers potent cholesterol lowering activity by targeting squalene synthase (SS). SQS1 is composed of a 2,8-dioxobicyclic[3.2.1]octane-3,4,5-tricarboxyclic acid core that is connected to two lipophilic polyketide arms. These initial steps feature the priming of an unusual benzoic acid starter unit onto the highly reducing polyketide synthase clz14, followed by oxaloacetate extension and product release to generate a tricarboxylic acid containing product. The phenylalanine ammonia lyase (PAL) clz10 and the acyl-CoA ligase clz12 are involved in transforming phenylalanine into benzoyl-CoA. The citrate synthase-like protein clz17 is involved in connecting the C-alpha-carbons of the hexaketide chain and oxaloacetate to afford the tricarboxylic acid unit. The potential hydrolytic enzymes, clz11 and clz13, are in close proximity to pks2 and may participate in product release. On the other side, the tetraketide arm is synthesized by a the squalestatin tetraketide synthase clz2 and enzymatically esterified to the core in the last biosynthetic step, by the acetyltransferase clz6. The biosynthesis of the tetraketide must involve 3 rounds of chain extension. After the first and second rounds methyl-transfer occurs, and in all rounds of extension the ketoreductase and dehydratase are active. The enoyl reductase and C-MeT of clz2 are not active in the final round of extension. The acetyltransferase clz6 appears to have a broad substrate selectivity for its acyl CoA substrate, allowing the in vitro synthesis of novel squalestatins. The biosynthesis of SQS1 requires several oxidative steps likely performed by oxidoreductases clz3, clz15 and clz16. Finally, in support of the identification of the cluster as being responsible for SQS1 production, the cluster contains a gene encoding a putative squalene synthase (SS) clz20, suggesting a likely mechanism for self-resistance. This chain is Oxidoreductase clz16, found in Cochliobolus lunatus (Filamentous fungus).